A 491-amino-acid polypeptide reads, in one-letter code: Cytochrome P450 2B3 (491 aa).

Cysteine 436 contacts heme.

It belongs to the cytochrome P450 family. Heme is required as a cofactor. In terms of tissue distribution, liver. Not found in the lung, kidney and prostate.

It is found in the endoplasmic reticulum membrane. It localises to the microsome membrane. It carries out the reaction an organic molecule + reduced [NADPH--hemoprotein reductase] + O2 = an alcohol + oxidized [NADPH--hemoprotein reductase] + H2O + H(+). In terms of biological role, cytochromes P450 are a group of heme-thiolate monooxygenases. In liver microsomes, this enzyme is involved in an NADPH-dependent electron transport pathway. It oxidizes a variety of structurally unrelated compounds, including steroids, fatty acids, and xenobiotics. The sequence is that of Cytochrome P450 2B3 (Cyp2b3) from Rattus norvegicus (Rat).